The chain runs to 342 residues: Probable dual-specificity RNA methyltransferase RlmN (342 aa).

The Proton acceptor role is filled by glutamate 91. The region spanning tyrosine 97–aspartate 327 is the Radical SAM core domain. The cysteines at positions 104 and 332 are disulfide-linked. [4Fe-4S] cluster is bound by residues cysteine 111, cysteine 115, and cysteine 118. Residues glycine 158 to glutamate 159, serine 190, serine 213 to histidine 215, and asparagine 289 each bind S-adenosyl-L-methionine. Catalysis depends on cysteine 332, which acts as the S-methylcysteine intermediate.

This sequence belongs to the radical SAM superfamily. RlmN family. [4Fe-4S] cluster is required as a cofactor.

Its subcellular location is the cytoplasm. It catalyses the reaction adenosine(2503) in 23S rRNA + 2 reduced [2Fe-2S]-[ferredoxin] + 2 S-adenosyl-L-methionine = 2-methyladenosine(2503) in 23S rRNA + 5'-deoxyadenosine + L-methionine + 2 oxidized [2Fe-2S]-[ferredoxin] + S-adenosyl-L-homocysteine. The enzyme catalyses adenosine(37) in tRNA + 2 reduced [2Fe-2S]-[ferredoxin] + 2 S-adenosyl-L-methionine = 2-methyladenosine(37) in tRNA + 5'-deoxyadenosine + L-methionine + 2 oxidized [2Fe-2S]-[ferredoxin] + S-adenosyl-L-homocysteine. In terms of biological role, specifically methylates position 2 of adenine 2503 in 23S rRNA and position 2 of adenine 37 in tRNAs. In Clostridium botulinum (strain Loch Maree / Type A3), this protein is Probable dual-specificity RNA methyltransferase RlmN.